Reading from the N-terminus, the 170-residue chain is UPF0260 protein Rpal_2074 (170 aa).

Belongs to the UPF0260 family.

The sequence is that of UPF0260 protein Rpal_2074 from Rhodopseudomonas palustris (strain TIE-1).